The following is a 201-amino-acid chain: ATP-dependent Clp protease proteolytic subunit (201 aa).

Residue Ser-101 is the Nucleophile of the active site. His-126 is a catalytic residue.

Belongs to the peptidase S14 family. In terms of assembly, component of the chloroplastic Clp protease core complex.

It localises to the plastid. Its subcellular location is the chloroplast stroma. The enzyme catalyses Hydrolysis of proteins to small peptides in the presence of ATP and magnesium. alpha-casein is the usual test substrate. In the absence of ATP, only oligopeptides shorter than five residues are hydrolyzed (such as succinyl-Leu-Tyr-|-NHMec, and Leu-Tyr-Leu-|-Tyr-Trp, in which cleavage of the -Tyr-|-Leu- and -Tyr-|-Trp bonds also occurs).. In terms of biological role, cleaves peptides in various proteins in a process that requires ATP hydrolysis. Has a chymotrypsin-like activity. Plays a major role in the degradation of misfolded proteins. The protein is ATP-dependent Clp protease proteolytic subunit of Chlorella vulgaris (Green alga).